The chain runs to 230 residues: Ubiquitin carboxyl-terminal hydrolase isozyme L3 (230 aa).

The region spanning Arg5–Ala229 is the UCH catalytic domain. Residues Pro8–Pro13 form an interaction with ubiquitin region. The active-site Nucleophile is the Cys95. Phosphoserine is present on Ser130. Positions Ala152–Ala159 are interaction with ubiquitin. Crossover loop which restricts access of large ubiquitin adducts to the active site. His169 (proton donor) is an active-site residue. Positions Glu219–Ala224 are interaction with ubiquitin.

It belongs to the peptidase C12 family. In terms of assembly, preferentially binds diubiquitin; the interaction does not hydrolyze diubiquitin but, in vitro, inhibits the hydrolyzing activity on other substrates. Ubiquitously expressed, with highest levels in brain, liver, heart, thymus, kidney and testis. Highly expressed in the cauda epididymidis, in meiotic pachytene spermatocytes and post-meiotic spematids. In the retina, enriched in the photoreceptor inner segment.

It localises to the cytoplasm. The enzyme catalyses Thiol-dependent hydrolysis of ester, thioester, amide, peptide and isopeptide bonds formed by the C-terminal Gly of ubiquitin (a 76-residue protein attached to proteins as an intracellular targeting signal).. Its activity is regulated as follows. Inhibited by monoubiquitin and diubiquitin. Functionally, deubiquitinating enzyme (DUB) that controls levels of cellular ubiquitin through processing of ubiquitin precursors and ubiquitinated proteins. Thiol protease that recognizes and hydrolyzes a peptide bond at the C-terminal glycine of either ubiquitin or NEDD8. Has a 10-fold preference for Arg and Lys at position P3'', and exhibits a preference towards 'Lys-48'-linked ubiquitin chains. Deubiquitinates ENAC in apical compartments, thereby regulating apical membrane recycling. Indirectly increases the phosphorylation of IGFIR, AKT and FOXO1 and promotes insulin-signaling and insulin-induced adipogenesis. Required for stress-response retinal, skeletal muscle and germ cell maintenance. May be involved in working memory. Can hydrolyze UBB(+1), a mutated form of ubiquitin which is not effectively degraded by the proteasome. This Mus musculus (Mouse) protein is Ubiquitin carboxyl-terminal hydrolase isozyme L3 (Uchl3).